A 204-amino-acid polypeptide reads, in one-letter code: Allurin (204 aa).

The signal sequence occupies residues 1–19 (MDTFNFIICISALFHSTYG). Positions 36 to 138 (VDLHNLLRRS…DKMIGHYTQV (103 aa)) constitute an SCP domain. Residues 140–161 (WAKTYLLGCGLAFCPGNYYPYV) traverse the membrane as a helical segment.

Belongs to the CRISP family. Expressed only in oviduct.

The protein localises to the membrane. The protein resides in the secreted. In terms of biological role, involved in sperm chemoattraction. The chain is Allurin (crisp-a) from Xenopus tropicalis (Western clawed frog).